The following is a 333-amino-acid chain: Threonine-phosphate decarboxylase (333 aa).

K199 bears the N6-(pyridoxal phosphate)lysine mark.

It belongs to the class-I pyridoxal-phosphate-dependent aminotransferase family. Homodimer. It depends on pyridoxal 5'-phosphate as a cofactor.

The protein localises to the cytoplasm. The catalysed reaction is O-phospho-L-threonine + H(+) = (R)-1-aminopropan-2-yl phosphate + CO2. Its pathway is cofactor biosynthesis; adenosylcobalamin biosynthesis. Decarboxylates L-threonine-O-3-phosphate to yield (R)-1-amino-2-propanol O-2-phosphate, the precursor for the linkage between the nucleotide loop and the corrin ring in cobalamin. This chain is Threonine-phosphate decarboxylase (cobC), found in Sinorhizobium sp.